The sequence spans 66 residues: Large ribosomal subunit protein bL33c (66 aa).

The protein belongs to the bacterial ribosomal protein bL33 family.

It is found in the plastid. The protein resides in the chloroplast. The sequence is that of Large ribosomal subunit protein bL33c from Physcomitrium patens (Spreading-leaved earth moss).